The primary structure comprises 1288 residues: CLIP-associating protein 2 (1288 aa).

A disordered region spans residues 1–62; it reads MALSLSQDRS…AAKSGASKEG (62 aa). Composition is skewed to low complexity over residues 19–32 and 40–62; these read GSRP…FKVP and ESAS…SKEG. The tract at residues 62–312 is TOG 1; it reads GAGAVDEEDF…RTLQSCLKSS (251 aa). HEAT repeat units lie at residues 174–209, 210–246, and 251–288; these read HGAE…IRHT, HVPR…EWQT, and RHAA…HFPG. Disordered stretches follow at residues 314-571 and 614-634; these read SVAS…SSRL and ANSD…NGSI. Composition is skewed to low complexity over residues 317-337 and 347-358; these read SLPQ…RPLS and PAGSKSSGSPAS. Composition is skewed to polar residues over residues 406–421 and 468–478; these read KQTL…SQVD and TALSTLSTGAQ. An SXIP motif 1 motif is present at residues 490 to 493; that stretch reads SRIP. Polar residues predominate over residues 496-518; the sequence is QGCSRDSSPTRLSVAPSNISHIY. Residues 527 to 530 carry the SXIP motif 2 motif; sequence SRIP. Positions 616–630 are enriched in low complexity; it reads SDASSACSERSYSSR. A TOG 2 region spans residues 638–889; it reads MRQTEDVAEV…TKLLQNHLRN (252 aa). HEAT repeat units lie at residues 718-755 and 780-817; these read RVFS…KMGA and LQFT…QMEP. Residues 891–900 show a composition bias toward polar residues; sequence GNTAQASIGS. Disordered regions lie at residues 891–936 and 960–1047; these read GNTA…FDYD and SVRS…DSGV. The segment covering 912–931 has biased composition (low complexity); the sequence is SWSSPLTSPTNTSQNTPSPS. Over residues 963–977 the composition is skewed to basic and acidic residues; sequence SQEDMTEPPRKREGD. Over residues 1019–1030 the composition is skewed to low complexity; it reads SDSSFGSSSFNK. The span at 1036–1046 shows a compositional bias: acidic residues; that stretch reads DQEESLTDDSG. HEAT repeat units follow at residues 1047-1086, 1091-1128, 1167-1204, and 1209-1246; these read VDQS…ETQL, EHFK…RQPW, ISPD…RLPK, and QMLP…VIGE.

This sequence belongs to the CLASP family. As to quaternary structure, interacts with microtubules.

The protein resides in the cytoplasm. The protein localises to the cytoskeleton. It localises to the microtubule organizing center. Its subcellular location is the centrosome. It is found in the chromosome. The protein resides in the centromere. The protein localises to the kinetochore. It localises to the spindle. Its subcellular location is the golgi apparatus. It is found in the trans-Golgi network. The protein resides in the cell membrane. The protein localises to the cell projection. It localises to the ruffle membrane. Microtubule plus-end tracking protein that promotes the stabilization of dynamic microtubules. Involved in the nucleation of noncentrosomal microtubules originating from the trans-Golgi network (TGN). Required for the polarization of the cytoplasmic microtubule arrays in migrating cells towards the leading edge of the cell. May act at the cell cortex to enhance the frequency of rescue of depolymerizing microtubules. This cortical microtubule stabilizing activity is regulated at least in part by phosphatidylinositol 3-kinase signaling. Also performs a similar stabilizing function at the kinetochore which is essential for the bipolar alignment of chromosomes on the mitotic spindle. This chain is CLIP-associating protein 2 (clasp2), found in Danio rerio (Zebrafish).